A 440-amino-acid polypeptide reads, in one-letter code: Chromosome partition protein MukF (440 aa).

Residues 208-236 (LSETSGTLRELQDTLDAAGDKLQANLLRI) are leucine-zipper.

Belongs to the MukF family. As to quaternary structure, interacts, and probably forms a ternary complex, with MukE and MukB via its C-terminal region. The complex formation is stimulated by calcium or magnesium. It is required for an interaction between MukE and MukB.

It localises to the cytoplasm. Its subcellular location is the nucleoid. Involved in chromosome condensation, segregation and cell cycle progression. May participate in facilitating chromosome segregation by condensation DNA from both sides of a centrally located replisome during cell division. Not required for mini-F plasmid partitioning. Probably acts via its interaction with MukB and MukE. Overexpression results in anucleate cells. It has a calcium binding activity. The polypeptide is Chromosome partition protein MukF (Klebsiella pneumoniae (strain 342)).